A 453-amino-acid chain; its full sequence is Ribosomal protein uS12 methylthiotransferase RimO (453 aa).

The MTTase N-terminal domain occupies 9–124 (PKVGFVSLGC…VMEAVHTHLP (116 aa)). 6 residues coordinate [4Fe-4S] cluster: Cys-18, Cys-54, Cys-83, Cys-155, Cys-159, and Cys-162. Residues 141–382 (LTPKHYAYLK…MEVAERVSAR (242 aa)) enclose the Radical SAM core domain. A TRAM domain is found at 385–453 (QRKVGKSLRV…ADGHDLWGEV (69 aa)).

This sequence belongs to the methylthiotransferase family. RimO subfamily. [4Fe-4S] cluster is required as a cofactor.

The protein resides in the cytoplasm. The enzyme catalyses L-aspartate(89)-[ribosomal protein uS12]-hydrogen + (sulfur carrier)-SH + AH2 + 2 S-adenosyl-L-methionine = 3-methylsulfanyl-L-aspartate(89)-[ribosomal protein uS12]-hydrogen + (sulfur carrier)-H + 5'-deoxyadenosine + L-methionine + A + S-adenosyl-L-homocysteine + 2 H(+). Its function is as follows. Catalyzes the methylthiolation of an aspartic acid residue of ribosomal protein uS12. In Ralstonia pickettii (strain 12J), this protein is Ribosomal protein uS12 methylthiotransferase RimO.